The following is a 282-amino-acid chain: Probable protein phosphatase 2C 10 (282 aa).

Residues 34–281 (KFGYSLVKGK…DDISCIVVRL (248 aa)) enclose the PPM-type phosphatase domain. Mn(2+) is bound by residues aspartate 71, glycine 72, aspartate 233, and aspartate 272.

Belongs to the PP2C family. The cofactor is Mg(2+). Requires Mn(2+) as cofactor.

It carries out the reaction O-phospho-L-seryl-[protein] + H2O = L-seryl-[protein] + phosphate. It catalyses the reaction O-phospho-L-threonyl-[protein] + H2O = L-threonyl-[protein] + phosphate. This Arabidopsis thaliana (Mouse-ear cress) protein is Probable protein phosphatase 2C 10.